A 241-amino-acid chain; its full sequence is Chaperone protein FimC (241 aa).

The signal sequence occupies residues 1–36; the sequence is MSNKNVNVRKSQEITFCLLAGILMFMAMVVAGRAEA.

Belongs to the periplasmic pilus chaperone family.

The protein resides in the periplasm. Its function is as follows. Required for the biogenesis of type 1 fimbriae. Binds and interact with FimH. In Escherichia coli O6:H1 (strain CFT073 / ATCC 700928 / UPEC), this protein is Chaperone protein FimC (fimC).